The sequence spans 132 residues: Small ribosomal subunit protein eS12 (132 aa).

Ala-2 bears the N-acetylalanine mark. Lys-129 is modified (N6-succinyllysine).

Belongs to the eukaryotic ribosomal protein eS12 family. In terms of assembly, part of the small subunit (SSU) processome, composed of more than 70 proteins and the RNA chaperone small nucleolar RNA (snoRNA) U3. Subunit of the 40S ribosomal complex.

It localises to the nucleus. Its subcellular location is the nucleolus. Part of the small subunit (SSU) processome, first precursor of the small eukaryotic ribosomal subunit. During the assembly of the SSU processome in the nucleolus, many ribosome biogenesis factors, an RNA chaperone and ribosomal proteins associate with the nascent pre-rRNA and work in concert to generate RNA folding, modifications, rearrangements and cleavage as well as targeted degradation of pre-ribosomal RNA by the RNA exosome. Subunit of the 40S ribosomal complex. The sequence is that of Small ribosomal subunit protein eS12 (Rps12) from Rattus norvegicus (Rat).